Consider the following 550-residue polypeptide: DNA mismatch repair protein MutL (550 aa).

Belongs to the DNA mismatch repair MutL/HexB family.

In terms of biological role, this protein is involved in the repair of mismatches in DNA. It is required for dam-dependent methyl-directed DNA mismatch repair. May act as a 'molecular matchmaker', a protein that promotes the formation of a stable complex between two or more DNA-binding proteins in an ATP-dependent manner without itself being part of a final effector complex. The chain is DNA mismatch repair protein MutL from Microcystis aeruginosa (strain NIES-843 / IAM M-2473).